The sequence spans 391 residues: Rhizopuspepsin-3 (391 aa).

The N-terminal stretch at methionine 1–alanine 21 is a signal peptide. A propeptide spans alanine 22 to aspartate 68 (activation peptide). The region spanning tyrosine 84 to alanine 388 is the Peptidase A1 domain. Aspartate 102 is a catalytic residue. Cysteine 115 and cysteine 118 form a disulfide bridge. Residue aspartate 285 is part of the active site. The cysteines at positions 319 and 352 are disulfide-linked.

The protein belongs to the peptidase A1 family.

The enzyme catalyses Hydrolysis of proteins with broad specificity similar to that of pepsin A, preferring hydrophobic residues at P1 and P1'. Clots milk and activates trypsinogen. Does not cleave 4-Gln-|-His-5, but does cleave 10-His-|-Leu-11 and 12-Val-|-Glu-13 in B chain of insulin.. In Rhizopus niveus, this protein is Rhizopuspepsin-3.